Consider the following 101-residue polypeptide: Large ribosomal subunit protein uL24 (101 aa).

Belongs to the universal ribosomal protein uL24 family. Part of the 50S ribosomal subunit.

Functionally, one of two assembly initiator proteins, it binds directly to the 5'-end of the 23S rRNA, where it nucleates assembly of the 50S subunit. One of the proteins that surrounds the polypeptide exit tunnel on the outside of the subunit. In Elusimicrobium minutum (strain Pei191), this protein is Large ribosomal subunit protein uL24.